Here is a 480-residue protein sequence, read N- to C-terminus: ATP synthase subunit beta (480 aa).

Residue 166–173 (GGAGVGKT) participates in ATP binding.

It belongs to the ATPase alpha/beta chains family. F-type ATPases have 2 components, CF(1) - the catalytic core - and CF(0) - the membrane proton channel. CF(1) has five subunits: alpha(3), beta(3), gamma(1), delta(1), epsilon(1). CF(0) has three main subunits: a(1), b(2) and c(9-12). The alpha and beta chains form an alternating ring which encloses part of the gamma chain. CF(1) is attached to CF(0) by a central stalk formed by the gamma and epsilon chains, while a peripheral stalk is formed by the delta and b chains.

The protein resides in the cell membrane. It carries out the reaction ATP + H2O + 4 H(+)(in) = ADP + phosphate + 5 H(+)(out). Its function is as follows. Produces ATP from ADP in the presence of a proton gradient across the membrane. The catalytic sites are hosted primarily by the beta subunits. This Streptomyces griseus subsp. griseus (strain JCM 4626 / CBS 651.72 / NBRC 13350 / KCC S-0626 / ISP 5235) protein is ATP synthase subunit beta.